A 965-amino-acid chain; its full sequence is Probable ion channel POLLUX (965 aa).

Low complexity predominate over residues 1–11 (MAESDGGEASP). Disordered regions lie at residues 1–76 (MAES…APRG) and 108–158 (GPHA…KSLA). The segment covering 32 to 42 (LTKSRTISGSA) has biased composition (polar residues). 2 stretches are compositionally biased toward low complexity: residues 52–66 (SNSS…SSTA) and 118–149 (RSQQ…ASVS). The next 4 helical transmembrane spans lie at 187-207 (LSPY…LAIW), 251-271 (ADWN…VFLV), 317-337 (LALL…LYVV), and 369-389 (IVSV…LGLV). RCK N-terminal domains follow at residues 410–551 (VNHI…ETVV) and 670–818 (PEKI…DKSI).

This sequence belongs to the castor/pollux (TC 1.A.1.23) family. Expressed in roots, leaves, stems and panicles.

The protein localises to the nucleus membrane. Required for mycorrhizal symbiosis. This is Probable ion channel POLLUX from Oryza sativa subsp. japonica (Rice).